The following is a 388-amino-acid chain: Ribosomal RNA large subunit methyltransferase F (388 aa).

Residues 1 to 22 (MKTNNHNAKQAQTKTAKSNPSK) are compositionally biased toward polar residues. The segment at 1 to 51 (MKTNNHNAKQAQTKTAKSNPSKEVTKIKPKRVKNKPTAKAAKSTGLKTNAA) is disordered. The span at 27–36 (IKPKRVKNKP) shows a compositional bias: basic residues.

It belongs to the methyltransferase superfamily. METTL16/RlmF family.

The protein localises to the cytoplasm. It carries out the reaction adenosine(1618) in 23S rRNA + S-adenosyl-L-methionine = N(6)-methyladenosine(1618) in 23S rRNA + S-adenosyl-L-homocysteine + H(+). In terms of biological role, specifically methylates the adenine in position 1618 of 23S rRNA. In Vibrio campbellii (strain ATCC BAA-1116), this protein is Ribosomal RNA large subunit methyltransferase F.